The primary structure comprises 256 residues: GCN5-related N-acetyltransferase 10, chloroplastic (256 aa).

A chloroplast-targeting transit peptide spans 1–41 (MGHLPQSLYSAAGPKFPYPGSSGLGVDQRKLTWSRFPVFLR). An N-acetyltransferase domain is found at 106-256 (FMFFQAEVLS…RRVLMSKRFS (151 aa)). Residues 178–180 (LAV), 186–191 (RKKMAS), 217–219 (DAA), and Y224 each bind acetyl-CoA. Y224 serves as the catalytic Proton donor.

The protein belongs to the acetyltransferase family. GNAT subfamily. In terms of assembly, oligomer. In terms of processing, autoacetylated. In terms of tissue distribution, expressed in green tissues.

Its subcellular location is the plastid. It localises to the chloroplast. The catalysed reaction is an N-terminal L-alpha-aminoacyl-[protein] + acetyl-CoA = N-terminal N(alpha)-acetyl-L-alpha-aminoacyl-[protein] + CoA + H(+). It catalyses the reaction L-lysyl-[protein] + acetyl-CoA = N(6)-acetyl-L-lysyl-[protein] + CoA + H(+). It carries out the reaction N-terminal L-methionyl-[protein] + acetyl-CoA = N-terminal N(alpha)-acetyl-L-methionyl-[protein] + CoA + H(+). The enzyme catalyses N-terminal L-seryl-[protein] + acetyl-CoA = N-terminal N(alpha)-acetyl-L-seryl-[protein] + CoA + H(+). The catalysed reaction is N-terminal L-valyl-[protein] + acetyl-CoA = N-terminal N(alpha)-acetyl-L-valyl-[protein] + CoA + H(+). It catalyses the reaction N-terminal L-threonyl-[protein] + acetyl-CoA = N-terminal N(alpha)-acetyl-L-threonyl-[protein] + CoA + H(+). It carries out the reaction N-terminal L-alanyl-[protein] + acetyl-CoA = N-terminal N(alpha)-acetyl-L-alanyl-[protein] + CoA + H(+). The enzyme catalyses N-terminal glycyl-[protein] + acetyl-CoA = N-terminal N(alpha)-acetylglycyl-[protein] + CoA + H(+). In terms of biological role, protein acetyltransferase with dual specificity triggering both N-alpha-acetylation (NTA), with a preference for leucine, methionine, serine, valine and to a lower extent threonine and alanine as substrates (can also use glycine), and epsilon-lysine acetylation (KA) of several plastid proteins. The chain is GCN5-related N-acetyltransferase 10, chloroplastic from Arabidopsis thaliana (Mouse-ear cress).